The following is a 791-amino-acid chain: Cellobionic acid phosphorylase (791 aa).

The active-site Proton donor is the Asp478.

It belongs to the glycosyl hydrolase 94 family. Cellobionic acid phosphorylase subfamily. As to quaternary structure, homodimer.

It carries out the reaction 4-O-beta-D-glucopyranosyl-D-gluconate + phosphate = D-gluconate + alpha-D-glucose 1-phosphate. It functions in the pathway glycan metabolism; cellulose degradation. In terms of biological role, catalyzes the reversible phosphorolysis of cellobionic acid (4-O-beta-D-glucopyranosyl-D-gluconate), a probable step in cellulose degradation. May be part of a metabolic pathway where cellobionic acid is converted into alpha-D-glucose 1-phosphate and D-gluconic acid to enter glycolysis and the pentose phosphate pathway, respectively. Produces 4-O-beta-D-glucopyranosyl-D-glucuronate from alpha-D-glucose 1-phosphate and D-glucuronate with low activity in the synthetic direction. The sequence is that of Cellobionic acid phosphorylase from Neurospora crassa (strain ATCC 24698 / 74-OR23-1A / CBS 708.71 / DSM 1257 / FGSC 987).